Reading from the N-terminus, the 130-residue chain is S-adenosylmethionine decarboxylase proenzyme (130 aa).

Catalysis depends on Ser-63, which acts as the Schiff-base intermediate with substrate; via pyruvic acid. The residue at position 63 (Ser-63) is a Pyruvic acid (Ser); by autocatalysis. His-68 functions as the Proton acceptor; for processing activity in the catalytic mechanism. Cys-83 acts as the Proton donor; for catalytic activity in catalysis.

The protein belongs to the prokaryotic AdoMetDC family. Type 1 subfamily. In terms of assembly, heterotetramer of two alpha and two beta chains arranged as a dimer of alpha/beta heterodimers. Pyruvate serves as cofactor. Is synthesized initially as an inactive proenzyme. Formation of the active enzyme involves a self-maturation process in which the active site pyruvoyl group is generated from an internal serine residue via an autocatalytic post-translational modification. Two non-identical subunits are generated from the proenzyme in this reaction, and the pyruvate is formed at the N-terminus of the alpha chain, which is derived from the carboxyl end of the proenzyme. The post-translation cleavage follows an unusual pathway, termed non-hydrolytic serinolysis, in which the side chain hydroxyl group of the serine supplies its oxygen atom to form the C-terminus of the beta chain, while the remainder of the serine residue undergoes an oxidative deamination to produce ammonia and the pyruvoyl group blocking the N-terminus of the alpha chain.

The catalysed reaction is S-adenosyl-L-methionine + H(+) = S-adenosyl 3-(methylsulfanyl)propylamine + CO2. The protein operates within amine and polyamine biosynthesis; S-adenosylmethioninamine biosynthesis; S-adenosylmethioninamine from S-adenosyl-L-methionine: step 1/1. In terms of biological role, catalyzes the decarboxylation of S-adenosylmethionine to S-adenosylmethioninamine (dcAdoMet), the propylamine donor required for the synthesis of the polyamines spermine and spermidine from the diamine putrescine. This chain is S-adenosylmethionine decarboxylase proenzyme (speH), found in Thermotoga maritima (strain ATCC 43589 / DSM 3109 / JCM 10099 / NBRC 100826 / MSB8).